The sequence spans 81 residues: Large ribosomal subunit protein bL31 (81 aa).

Residues Cys-16, Cys-18, Cys-36, and Cys-39 each coordinate Zn(2+).

This sequence belongs to the bacterial ribosomal protein bL31 family. Type A subfamily. Part of the 50S ribosomal subunit. Requires Zn(2+) as cofactor.

In terms of biological role, binds the 23S rRNA. This is Large ribosomal subunit protein bL31 from Rhodopirellula baltica (strain DSM 10527 / NCIMB 13988 / SH1).